The following is a 246-amino-acid chain: V-type proton ATPase subunit D (246 aa).

The protein belongs to the V-ATPase D subunit family. V-ATPase is a heteromultimeric enzyme made up of two complexes: the ATP-hydrolytic V1 complex and the proton translocation V0 complex. The V1 complex consists of three catalytic AB heterodimers that form a heterohexamer, three peripheral stalks each consisting of EG heterodimers, one central rotor including subunits D and F, and the regulatory subunits C and H. The proton translocation complex V0 consists of the proton transport subunit a, a ring of proteolipid subunits c9c'', rotary subunit d, subunits e and f, and the accessory subunits VhaAC45 and ATP6AP2.

Its function is as follows. Subunit of the V1 complex of vacuolar(H+)-ATPase (V-ATPase), a multisubunit enzyme composed of a peripheral complex (V1) that hydrolyzes ATP and a membrane integral complex (V0) that translocates protons. V-ATPase is responsible for acidifying and maintaining the pH of intracellular compartments and in some cell types, is targeted to the plasma membrane, where it is responsible for acidifying the extracellular environment. This is V-type proton ATPase subunit D from Manduca sexta (Tobacco hawkmoth).